The chain runs to 232 residues: Large ribosomal subunit protein uL1 (232 aa).

The protein belongs to the universal ribosomal protein uL1 family. In terms of assembly, part of the 50S ribosomal subunit.

Its function is as follows. Binds directly to 23S rRNA. The L1 stalk is quite mobile in the ribosome, and is involved in E site tRNA release. Functionally, protein L1 is also a translational repressor protein, it controls the translation of the L11 operon by binding to its mRNA. The polypeptide is Large ribosomal subunit protein uL1 (Pelotomaculum thermopropionicum (strain DSM 13744 / JCM 10971 / SI)).